Reading from the N-terminus, the 158-residue chain is Crossover junction endodeoxyribonuclease RuvC (158 aa).

Catalysis depends on residues Asp-7, Glu-66, and Asp-139. Residues Asp-7, Glu-66, and Asp-139 each coordinate Mg(2+).

The protein belongs to the RuvC family. In terms of assembly, homodimer which binds Holliday junction (HJ) DNA. The HJ becomes 2-fold symmetrical on binding to RuvC with unstacked arms; it has a different conformation from HJ DNA in complex with RuvA. In the full resolvosome a probable DNA-RuvA(4)-RuvB(12)-RuvC(2) complex forms which resolves the HJ. Mg(2+) serves as cofactor.

It is found in the cytoplasm. The enzyme catalyses Endonucleolytic cleavage at a junction such as a reciprocal single-stranded crossover between two homologous DNA duplexes (Holliday junction).. Functionally, the RuvA-RuvB-RuvC complex processes Holliday junction (HJ) DNA during genetic recombination and DNA repair. Endonuclease that resolves HJ intermediates. Cleaves cruciform DNA by making single-stranded nicks across the HJ at symmetrical positions within the homologous arms, yielding a 5'-phosphate and a 3'-hydroxyl group; requires a central core of homology in the junction. The consensus cleavage sequence is 5'-(A/T)TT(C/G)-3'. Cleavage occurs on the 3'-side of the TT dinucleotide at the point of strand exchange. HJ branch migration catalyzed by RuvA-RuvB allows RuvC to scan DNA until it finds its consensus sequence, where it cleaves and resolves the cruciform DNA. This is Crossover junction endodeoxyribonuclease RuvC from Campylobacter hominis (strain ATCC BAA-381 / DSM 21671 / CCUG 45161 / LMG 19568 / NCTC 13146 / CH001A).